Reading from the N-terminus, the 458-residue chain is Protein adenylyltransferase FICD (458 aa).

The Cytoplasmic segment spans residues 1-23; sequence MMLIPMASVMAVTEPKWVSVWSR. The helical; Signal-anchor for type II membrane protein transmembrane segment at 24-44 threads the bilayer; it reads FLWVTLLSMVLGSLLALLLPL. Topologically, residues 45-458 are lumenal; it reads GAVEEQCLAV…GFKETLPVKP (414 aa). Ser79 carries the post-translational modification O-AMP-serine; by autocatalysis. At Thr80 the chain carries O-AMP-threonine; by autocatalysis. TPR repeat units follow at residues 106-139 and 140-173; these read ARAA…DPDF and VDAL…SPYH. Thr183 is modified (O-AMP-threonine; by autocatalysis). The short motif at 230–235 is the Inhibitory (S/T)XXXE(G/N) motif element; it reads TVAIEG. Glu234 is an ATP binding site. Asn275 carries N-linked (GlcNAc...) asparagine glycosylation. The region spanning 285–420 is the Fido domain; it reads VTISDVLEIH…VRPFIRFIAK (136 aa). Residue 316 to 319 coordinates ATP; the sequence is VGHH. Residue His363 is part of the active site. Residues 367–374, 399–400, and Asn407 contribute to the ATP site; these read DGNGRTSR and YY. N-linked (GlcNAc...) asparagine glycosylation occurs at Asn446.

The protein belongs to the fic family. In terms of assembly, homodimer. Interacts with HD. Mg(2+) serves as cofactor. Mn(2+) is required as a cofactor. Post-translationally, auto-AMPylated in vitro; it is unclear whether auto-AMPylation is relevant in vivo. In terms of processing, N-glycosylated; predominantly glycosylated at Asn-275. Ubiquitous.

The protein resides in the endoplasmic reticulum membrane. The enzyme catalyses L-tyrosyl-[protein] + ATP = O-(5'-adenylyl)-L-tyrosyl-[protein] + diphosphate. It catalyses the reaction 3-O-(5'-adenylyl)-L-threonyl-[protein] + H2O = L-threonyl-[protein] + AMP + H(+). The catalysed reaction is L-threonyl-[protein] + ATP = 3-O-(5'-adenylyl)-L-threonyl-[protein] + diphosphate. The side chain of Glu-234 determines which of the two opposing activities (AMPylase or de-AMPylase) will take place. In response to endoplasmic reticulum stress, mediates de-AMPylase activity. Adenylyltransferase activity is inhibited by the inhibitory helix present at the N-terminus: Glu-234 binds ATP and competes with ATP-binding at Arg-374, thereby preventing adenylyltransferase activity. In unstressed cells, disengagement of Glu-234 promotes adenylyltransferase activity. Activation dissociates ATP-binding from Glu-234, allowing ordered binding of the entire ATP moiety with the alpha-phosphate in an orientation that is productive for accepting an incoming target hydroxyl side chain. In terms of biological role, protein that can both mediate the addition of adenosine 5'-monophosphate (AMP) to specific residues of target proteins (AMPylation), and the removal of the same modification from target proteins (de-AMPylation), depending on the context. The side chain of Glu-231 determines which of the two opposing activities (AMPylase or de-AMPylase) will take place. Acts as a key regulator of the ERN1/IRE1-mediated unfolded protein response (UPR) by mediating AMPylation or de-AMPylation of HSPA5/BiP. In unstressed cells, acts as an adenylyltransferase by mediating AMPylation of HSPA5/BiP at 'Thr-518', thereby inactivating it. In response to endoplasmic reticulum stress, acts as a phosphodiesterase by mediating removal of ATP (de-AMPylation) from HSPA5/BiP at 'Thr-518', leading to restore HSPA5/BiP activity. Although it is able to AMPylate RhoA, Rac and Cdc42 Rho GTPases in vitro, Rho GTPases do not constitute physiological substrates. The polypeptide is Protein adenylyltransferase FICD (Homo sapiens (Human)).